The following is a 511-amino-acid chain: Bifunctional purine biosynthesis protein PurH (511 aa).

The MGS-like domain occupies 1-146; the sequence is MTKRALVSVS…KNHADVTVVV (146 aa).

Belongs to the PurH family.

It carries out the reaction (6R)-10-formyltetrahydrofolate + 5-amino-1-(5-phospho-beta-D-ribosyl)imidazole-4-carboxamide = 5-formamido-1-(5-phospho-D-ribosyl)imidazole-4-carboxamide + (6S)-5,6,7,8-tetrahydrofolate. The catalysed reaction is IMP + H2O = 5-formamido-1-(5-phospho-D-ribosyl)imidazole-4-carboxamide. It functions in the pathway purine metabolism; IMP biosynthesis via de novo pathway; 5-formamido-1-(5-phospho-D-ribosyl)imidazole-4-carboxamide from 5-amino-1-(5-phospho-D-ribosyl)imidazole-4-carboxamide (10-formyl THF route): step 1/1. The protein operates within purine metabolism; IMP biosynthesis via de novo pathway; IMP from 5-formamido-1-(5-phospho-D-ribosyl)imidazole-4-carboxamide: step 1/1. This is Bifunctional purine biosynthesis protein PurH from Shouchella clausii (strain KSM-K16) (Alkalihalobacillus clausii).